The chain runs to 358 residues: Protein SGT1 homolog B (358 aa).

TPR repeat units follow at residues 2-35, 37-69, and 70-103; these read AKEL…DPNC, AFFA…EPTL, and AKAY…APNE. The 90-residue stretch at 157–246 folds into the CS domain; that stretch reads KPMFRHEFYQ…AEIITWASLE (90 aa). A disordered region spans residues 255–275; that stretch reads PKPNVSSALSQRPVYPSSKPA. Residues 268 to 358 form the SGS domain; the sequence is VYPSSKPAKD…DGMELKKWEY (91 aa).

It belongs to the SGT1 family. In terms of assembly, interacts with RAR1 and HSP90-2. Interacts (via SGS domain) with HSC70-1 and HSC70-3.

The protein resides in the cytoplasm. Its subcellular location is the nucleus. In terms of biological role, involved in plant innate immunity. Essential for race-specific resistance conferred by multiple R genes, including RPP7, recognizing different oomycete pathogen isolates like avirulent Hyaloperonospora arabidopsidis (downy mildew). Contributes additively with RAR1 to RPP5-dependent resistance. Not required for RPM1, RPS2, RPS4 and RPS5-mediated resistance. Functions as a negative regulator of RPS5 accumulation by assisting its degradation. May be involved in heat shock response by associating with HSC70-1 chaperone. Required for the SCF(TIR1)-mediated degradation of Aux/IAA proteins, but maybe not for SCF(TIR1) assembly or binding to its Aux/IAA substrates. Probably required for SCF-mediated ubiquitination, by coupling HSP90 to SCF complex for ubiquitination of HSP90 client proteins. Required for the coronatine/jasmonic acid-mediated signal transduction pathway. The chain is Protein SGT1 homolog B from Arabidopsis thaliana (Mouse-ear cress).